Here is a 427-residue protein sequence, read N- to C-terminus: Vitamin D3 receptor (427 aa).

The nuclear receptor DNA-binding region spans proline 21–threonine 96. Positions 24, 27, 41, 44, 60, 66, 76, and 79 each coordinate Zn(2+). 2 consecutive NR C4-type zinc fingers follow at residues cysteine 24 to cysteine 44 and cysteine 60 to cysteine 79. The interval aspartate 97–glutamate 126 is hinge. Residues glutamate 127 to glycine 423 enclose the NR LBD domain. Tyrosine 143 serves as a coordination point for calcitriol. The disordered stretch occupies residues aspartate 149–serine 201. A compositionally biased stretch (low complexity) spans serine 168–serine 193. Residue serine 237 participates in calcitriol binding. Residues lysine 246–lysine 264 form an interaction with coactivator LXXLL motif region. Calcitriol-binding residues include arginine 274, serine 278, histidine 305, and histidine 397. A 9aaTAD motif is present at residues proline 416–asparagine 424.

It belongs to the nuclear hormone receptor family. NR1 subfamily. Homodimer in the absence of bound vitamin D3. Heterodimer with RXRA after vitamin D3 binding. Interacts with MED1, NCOA1, NCOA2, NCOA3 and NCOA6 coactivators, leading to a strong increase of transcription of target genes. Interacts with the corepressor NCOR1. Interacts with SNW1. Interacts with IRX4, the interaction does not affect its transactivation activity. Interacts with CRY1. Interacts with CRY2 in a ligand-dependent manner. In terms of processing, ubiquitinated by UBR5, leading to its degradation: UBR5 specifically recognizes and binds ligand-bound VDR when it is not associated with coactivators (NCOAs). In presence of NCOAs, the UBR5-degron is not accessible, preventing its ubiquitination and degradation.

The protein resides in the nucleus. Its subcellular location is the cytoplasm. Its function is as follows. Nuclear receptor for calcitriol, the active form of vitamin D3 which mediates the action of this vitamin on cells. Enters the nucleus upon vitamin D3 binding where it forms heterodimers with the retinoid X receptor/RXR. The VDR-RXR heterodimers bind to specific response elements on DNA and activate the transcription of vitamin D3-responsive target genes. Plays a central role in calcium homeostasis. Also functions as a receptor for the secondary bile acid lithocholic acid (LCA) and its metabolites. The polypeptide is Vitamin D3 receptor (VDR) (Sus scrofa (Pig)).